The following is a 123-amino-acid chain: Large ribosomal subunit protein uL29 (123 aa).

This sequence belongs to the universal ribosomal protein uL29 family. In terms of assembly, component of the large ribosomal subunit.

It localises to the cytoplasm. In terms of biological role, component of the large ribosomal subunit. The ribosome is a large ribonucleoprotein complex responsible for the synthesis of proteins in the cell. This is Large ribosomal subunit protein uL29 (rpl35) from Ictalurus punctatus (Channel catfish).